A 180-amino-acid chain; its full sequence is Large ribosomal subunit protein uL5 (180 aa).

It belongs to the universal ribosomal protein uL5 family. As to quaternary structure, part of the 50S ribosomal subunit; part of the 5S rRNA/L5/L18/L25 subcomplex. Contacts the 5S rRNA and the P site tRNA. Forms a bridge to the 30S subunit in the 70S ribosome.

In terms of biological role, this is one of the proteins that bind and probably mediate the attachment of the 5S RNA into the large ribosomal subunit, where it forms part of the central protuberance. In the 70S ribosome it contacts protein S13 of the 30S subunit (bridge B1b), connecting the 2 subunits; this bridge is implicated in subunit movement. Contacts the P site tRNA; the 5S rRNA and some of its associated proteins might help stabilize positioning of ribosome-bound tRNAs. This chain is Large ribosomal subunit protein uL5, found in Lactobacillus delbrueckii subsp. bulgaricus (strain ATCC 11842 / DSM 20081 / BCRC 10696 / JCM 1002 / NBRC 13953 / NCIMB 11778 / NCTC 12712 / WDCM 00102 / Lb 14).